Here is a 91-residue protein sequence, read N- to C-terminus: Small ribosomal subunit protein bS18 (91 aa).

The interval 1–27 (MTQQSNTERKPRAKGPKRPRKPKVDPF) is disordered. The span at 11-21 (PRAKGPKRPRK) shows a compositional bias: basic residues.

The protein belongs to the bacterial ribosomal protein bS18 family. As to quaternary structure, part of the 30S ribosomal subunit. Forms a tight heterodimer with protein bS6.

Its function is as follows. Binds as a heterodimer with protein bS6 to the central domain of the 16S rRNA, where it helps stabilize the platform of the 30S subunit. This chain is Small ribosomal subunit protein bS18, found in Deinococcus geothermalis (strain DSM 11300 / CIP 105573 / AG-3a).